Here is a 199-residue protein sequence, read N- to C-terminus: Adenylyl-sulfate kinase (199 aa).

34 to 41 (GLSGSGKS) contributes to the ATP binding site. The active-site Phosphoserine intermediate is the Ser108.

This sequence belongs to the APS kinase family.

The catalysed reaction is adenosine 5'-phosphosulfate + ATP = 3'-phosphoadenylyl sulfate + ADP + H(+). The protein operates within sulfur metabolism; hydrogen sulfide biosynthesis; sulfite from sulfate: step 2/3. Its function is as follows. Catalyzes the synthesis of activated sulfate. The sequence is that of Adenylyl-sulfate kinase from Staphylococcus carnosus (strain TM300).